A 456-amino-acid polypeptide reads, in one-letter code: tRNA modification GTPase MnmE (456 aa).

The (6S)-5-formyl-5,6,7,8-tetrahydrofolate site is built by arginine 24, glutamate 81, and lysine 120. In terms of domain architecture, TrmE-type G spans 216–379 (GMTVVIAGRP…LREHLKACMG (164 aa)). Asparagine 226 serves as a coordination point for K(+). GTP is bound by residues 226-231 (NAGKSS), 245-251 (TEIAGTT), 270-273 (DTAG), 335-338 (NKAD), and 359-361 (SAR). Serine 230 provides a ligand contact to Mg(2+). Residues threonine 245, isoleucine 247, and threonine 250 each coordinate K(+). Threonine 251 lines the Mg(2+) pocket. Lysine 456 is a binding site for (6S)-5-formyl-5,6,7,8-tetrahydrofolate.

It belongs to the TRAFAC class TrmE-Era-EngA-EngB-Septin-like GTPase superfamily. TrmE GTPase family. As to quaternary structure, homodimer. Heterotetramer of two MnmE and two MnmG subunits. Requires K(+) as cofactor.

It is found in the cytoplasm. Functionally, exhibits a very high intrinsic GTPase hydrolysis rate. Involved in the addition of a carboxymethylaminomethyl (cmnm) group at the wobble position (U34) of certain tRNAs, forming tRNA-cmnm(5)s(2)U34. The polypeptide is tRNA modification GTPase MnmE (Pseudomonas savastanoi pv. phaseolicola (strain 1448A / Race 6) (Pseudomonas syringae pv. phaseolicola (strain 1448A / Race 6))).